Consider the following 432-residue polypeptide: PC-esterase domain-containing protein 1B (432 aa).

Disordered regions lie at residues 273-312 and 407-432; these read WESS…SPGL and GPYM…SRPQ. A compositionally biased stretch (polar residues) spans 285-294; it reads QDNIGPQFAQ. Residues 296–312 show a composition bias toward pro residues; sequence PPYPFPRPPPLLPSPGL.

This sequence belongs to the PC-esterase family.

In Rattus norvegicus (Rat), this protein is PC-esterase domain-containing protein 1B (Pced1b).